The sequence spans 298 residues: Lysozyme-like protein 1 (298 aa).

The signal sequence occupies residues M1–A16. The 219-residue stretch at Y59 to F277 folds into the Ch-type lysozyme domain.

The protein belongs to the glycosyl hydrolase 25 family. As to expression, expressed in intestine, IL2 and IL6 neurons and some neurons in the head ganglia.

It is found in the cytoplasmic vesicle lumen. Functionally, involved in resistance to Gram-negative bacterium S.marcescens and to bacterium Gram-positive S.aureus infection. The polypeptide is Lysozyme-like protein 1 (Caenorhabditis elegans).